We begin with the raw amino-acid sequence, 97 residues long: MVKLRLKRCGRKQRAVYRIVAIDVRSRREGRDLQKVGFYDPIKNQTYLNVPAVLYFLGKGAQPTGTVHDISKKAEIFKELRVNQTIRVNQTKGGLHI.

It belongs to the bacterial ribosomal protein bS16 family.

The protein localises to the plastid. Its subcellular location is the chloroplast. The protein is Small ribosomal subunit protein bS16c of Piper cenocladum (Ant piper).